The primary structure comprises 439 residues: GTPase Der (439 aa).

2 consecutive EngA-type G domains span residues 3-167 and 176-351; these read PLVA…PKSS and TRIA…AQYS. Residues 9 to 16, 56 to 60, 119 to 122, 182 to 189, 229 to 233, and 294 to 297 each bind GTP; these read GRPNVGKS, DTGGF, NKVD, DTAGI, and NKWD. A KH-like domain is found at 352–436; the sequence is KRVSTSDLNR…PLKIIFRGRD (85 aa).

This sequence belongs to the TRAFAC class TrmE-Era-EngA-EngB-Septin-like GTPase superfamily. EngA (Der) GTPase family. As to quaternary structure, associates with the 50S ribosomal subunit.

Its function is as follows. GTPase that plays an essential role in the late steps of ribosome biogenesis. In Geobacter metallireducens (strain ATCC 53774 / DSM 7210 / GS-15), this protein is GTPase Der.